Reading from the N-terminus, the 223-residue chain is Trichome differentiation protein GL1 (223 aa).

2 consecutive HTH myb-type domains span residues 11 to 63 and 64 to 118; these read NQEY…MNYL and SPNV…SKKL. DNA-binding regions (H-T-H motif) lie at residues 39–63 and 91–114; these read WNRI…MNYL and WSLI…NTHL.

Its subcellular location is the nucleus. Its function is as follows. Regulates the production of a signal that induces hair (trichome) precursor cells on leaf primordia to differentiate. The protein is Trichome differentiation protein GL1 (GL1) of Arabidopsis lyrata (Lyre-leaved rock-cress).